A 220-amino-acid chain; its full sequence is MSLFGKMFGSGGKGGKSASPQEAIQRLRETEEMLTKKQEFLEKKIEQELVTAKKNGTKNKRAALQALKRKKRYEKQLAQIDGTLSTIEFQREALENAHTNTEVIKNMGYAAKAMKAAHDNMDIDKVDELMQDIIEQQELAQEISDAISKPVGFGEEFDEDELLAELEELEQEELDKNLLEIGDNVPLPNVPSTSLPSRPAKKKEEEDEDDMKDLEAWAAN.

Disordered regions lie at residues 1 to 22 (MSLFGKMFGSGGKGGKSASPQE) and 180 to 220 (EIGD…WAAN). Coiled coils occupy residues 21 to 88 (QEAI…STIE) and 123 to 181 (IDKV…LLEI).

Belongs to the SNF7 family. Probable core component of the endosomal sorting required for transport complex III (ESCRT-III). ESCRT-III components are thought to multimerize to form a flat lattice on the perimeter membrane of the endosome.

Its subcellular location is the cytoplasm. It is found in the cytosol. The protein localises to the late endosome membrane. It localises to the midbody. Its function is as follows. Probable core component of the endosomal sorting required for transport complex III (ESCRT-III) which is involved in multivesicular bodies (MVBs) formation and sorting of endosomal cargo proteins into MVBs. MVBs contain intraluminal vesicles (ILVs) that are generated by invagination and scission from the limiting membrane of the endosome and mostly are delivered to lysosomes enabling degradation of membrane proteins, such as stimulated growth factor receptors, lysosomal enzymes and lipids. This chain is Charged multivesicular body protein 4b (chmp4b), found in Danio rerio (Zebrafish).